The chain runs to 344 residues: Phosphate acyltransferase (344 aa).

The protein belongs to the PlsX family. Homodimer. Probably interacts with PlsY.

The protein localises to the cytoplasm. The catalysed reaction is a fatty acyl-[ACP] + phosphate = an acyl phosphate + holo-[ACP]. Its pathway is lipid metabolism; phospholipid metabolism. Catalyzes the reversible formation of acyl-phosphate (acyl-PO(4)) from acyl-[acyl-carrier-protein] (acyl-ACP). This enzyme utilizes acyl-ACP as fatty acyl donor, but not acyl-CoA. This chain is Phosphate acyltransferase, found in Thermosynechococcus vestitus (strain NIES-2133 / IAM M-273 / BP-1).